The primary structure comprises 460 residues: tRNA-2-methylthio-N(6)-dimethylallyladenosine synthase (460 aa).

Positions 23-138 constitute an MTTase N-terminal domain; that stretch reads RKVYVHTFGC…LPEMVARAER (116 aa). [4Fe-4S] cluster is bound by residues C32, C68, C101, C176, C180, and C183. In terms of domain architecture, Radical SAM core spans 162–394; it reads ARGRPTAFVT…QAAQRRIAAA (233 aa). The TRAM domain occupies 397–460; that stretch reads AAELGKVVEV…GGSSLSGTPA (64 aa).

It belongs to the methylthiotransferase family. MiaB subfamily. In terms of assembly, monomer. [4Fe-4S] cluster is required as a cofactor.

The protein localises to the cytoplasm. It carries out the reaction N(6)-dimethylallyladenosine(37) in tRNA + (sulfur carrier)-SH + AH2 + 2 S-adenosyl-L-methionine = 2-methylsulfanyl-N(6)-dimethylallyladenosine(37) in tRNA + (sulfur carrier)-H + 5'-deoxyadenosine + L-methionine + A + S-adenosyl-L-homocysteine + 2 H(+). Its function is as follows. Catalyzes the methylthiolation of N6-(dimethylallyl)adenosine (i(6)A), leading to the formation of 2-methylthio-N6-(dimethylallyl)adenosine (ms(2)i(6)A) at position 37 in tRNAs that read codons beginning with uridine. This is tRNA-2-methylthio-N(6)-dimethylallyladenosine synthase from Anaeromyxobacter sp. (strain Fw109-5).